Reading from the N-terminus, the 148-residue chain is MIDVVEIQKILPHRYPFLLIDRVCELETGKSVYAYKNITIAEQIFEGHFPGHPIYPGVMIIEGMAQAGGILAFKSAEDPSGLSIENKVVYFMSIDRAKFRNPVKPGDKLEYRLEVLKHKGNVWVLDGKAYVDDKLVAEAELKAMIVDK.

Residue histidine 48 is part of the active site.

The protein belongs to the thioester dehydratase family. FabZ subfamily.

Its subcellular location is the cytoplasm. The enzyme catalyses a (3R)-hydroxyacyl-[ACP] = a (2E)-enoyl-[ACP] + H2O. In terms of biological role, involved in unsaturated fatty acids biosynthesis. Catalyzes the dehydration of short chain beta-hydroxyacyl-ACPs and long chain saturated and unsaturated beta-hydroxyacyl-ACPs. This Campylobacter fetus subsp. fetus (strain 82-40) protein is 3-hydroxyacyl-[acyl-carrier-protein] dehydratase FabZ.